The chain runs to 56 residues: Protein translocase subunit SecE (56 aa).

A helical transmembrane segment spans residues 30 to 50; the sequence is VFWLVLFVSIFLGIVDYLMFL.

The protein belongs to the SecE/SEC61-gamma family. As to quaternary structure, component of the Sec protein translocase complex. Heterotrimer consisting of SecY, SecE and SecG subunits. The heterotrimers can form oligomers, although 1 heterotrimer is thought to be able to translocate proteins. Interacts with the ribosome. Interacts with SecDF, and other proteins may be involved. Interacts with SecA.

Its subcellular location is the cell inner membrane. In terms of biological role, essential subunit of the Sec protein translocation channel SecYEG. Clamps together the 2 halves of SecY. May contact the channel plug during translocation. The chain is Protein translocase subunit SecE from Borreliella burgdorferi (strain ATCC 35210 / DSM 4680 / CIP 102532 / B31) (Borrelia burgdorferi).